The primary structure comprises 589 residues: Transmembrane 9 superfamily member 3 (589 aa).

The signal sequence occupies residues 1–28 (MRPLPGALGVAAAAALWLLLLLLPRTRA). N174 is a glycosylation site (N-linked (GlcNAc...) asparagine). The next 5 membrane-spanning stretches (helical) occupy residues 224–244 (FSIF…SMIL), 294–314 (LIGS…VAMI), 328–348 (AIFV…SLYA), 360–380 (FIGA…INFI), and 389–409 (AIPF…ILPL). N419 carries an N-linked (GlcNAc...) asparagine glycan. The next 4 helical transmembrane spans lie at 449–469 (IVCL…YFIF), 482–502 (GFMM…TIVC), 519–539 (FLSA…YYFF), and 551–571 (FYFG…GAIG).

Belongs to the nonaspanin (TM9SF) (TC 9.A.2) family.

The protein localises to the membrane. In Homo sapiens (Human), this protein is Transmembrane 9 superfamily member 3 (TM9SF3).